The primary structure comprises 61 residues: LECHNQQSSQTPTTKTCSGETNCYKKWWSDHRGTIIERGCGCPKVKPGVNLNCCRRDRCNN.

4 cysteine pairs are disulfide-bonded: cysteine 3/cysteine 23, cysteine 17/cysteine 40, cysteine 42/cysteine 53, and cysteine 54/cysteine 59.

Belongs to the three-finger toxin family. Short-chain subfamily. Type I alpha-neurotoxin sub-subfamily. Expressed by the venom gland.

It is found in the secreted. Functionally, produces peripheral paralysis by blocking neuromuscular transmission at the postsynaptic site. Binds to the nicotinic acetylcholine receptor. The protein is Cobrotoxin-b of Naja kaouthia (Monocled cobra).